The primary structure comprises 410 residues: 3-phosphoshikimate 1-carboxyvinyltransferase (410 aa).

K20, S21, and R25 together coordinate 3-phosphoshikimate. Position 20 (K20) interacts with phosphoenolpyruvate. Phosphoenolpyruvate is bound by residues G87 and R115. S157, S158, Q159, S183, D293, and K320 together coordinate 3-phosphoshikimate. Q159 contacts phosphoenolpyruvate. The active-site Proton acceptor is D293. The phosphoenolpyruvate site is built by R324, R365, and K391.

This sequence belongs to the EPSP synthase family. Monomer.

The protein resides in the cytoplasm. It catalyses the reaction 3-phosphoshikimate + phosphoenolpyruvate = 5-O-(1-carboxyvinyl)-3-phosphoshikimate + phosphate. It functions in the pathway metabolic intermediate biosynthesis; chorismate biosynthesis. Its function is as follows. Catalyzes the transfer of the enolpyruvyl moiety of phosphoenolpyruvate (PEP) to the 5-hydroxyl of shikimate-3-phosphate (S3P) to produce enolpyruvyl shikimate-3-phosphate and inorganic phosphate. The chain is 3-phosphoshikimate 1-carboxyvinyltransferase from Thermoplasma volcanium (strain ATCC 51530 / DSM 4299 / JCM 9571 / NBRC 15438 / GSS1).